The primary structure comprises 77 residues: Acyl carrier protein (77 aa).

The Carrier domain maps to 1–76 (MATFDDVKAV…DVVNYIDNLK (76 aa)). At Ser-36 the chain carries O-(pantetheine 4'-phosphoryl)serine.

It belongs to the acyl carrier protein (ACP) family. Post-translationally, 4'-phosphopantetheine is transferred from CoA to a specific serine of apo-ACP by AcpS. This modification is essential for activity because fatty acids are bound in thioester linkage to the sulfhydryl of the prosthetic group.

The protein resides in the cytoplasm. It functions in the pathway lipid metabolism; fatty acid biosynthesis. Carrier of the growing fatty acid chain in fatty acid biosynthesis. In Campylobacter jejuni subsp. doylei (strain ATCC BAA-1458 / RM4099 / 269.97), this protein is Acyl carrier protein.